Here is a 544-residue protein sequence, read N- to C-terminus: MAKDIKFSEEARRSMLRGVDTLANAVKVTLGPKGRNVVLEKKFGSPLITNDGVTIAKEIELEDAFENMGAKLVAEVASKTNDVAGDGTTTATVLAQAMIREGLKNVTAGANPMGLRKGIEKAVTAAIEELKTISKPIEGKSSIAQVAAISAADEEVGQLIAEAMERVGNDGVITLEESKGFTTELDVVEGMQFDRGYASPYMITDSDKMEAVLDNPYILITDKKISNIQEILPVLEQVVQQGKPLLIIAEDVEGEALATLVVNKLRGTFNVVAVKAPGFGDRRKAMLEDIAILTGGEVITEELGRDLKSATVESLGRAGKVVVTKENTTVVEGIGNTEQIAARIGQIRAQLEETTSEFDREKLQERLAKLAGGVAVIKVGAATETELKERKLRIEDALNSTRAAVEEGIVAGGGTSLMNVYTKVASIVAEGDEATGINIVLRALEEPVRQIAINAGLEGSVVVERLKGEKVGVGFNAATGEWVNMLESGIVDPAKVTRSALQNAASVAAMFLTTEAVVADKPEPNAPAMPDMGGMGMGGMGGMM.

Residues 29–32 (TLGP), 86–90 (DGTTT), G413, 476–478 (NAA), and D492 contribute to the ATP site.

The protein belongs to the chaperonin (HSP60) family. As to quaternary structure, forms a cylinder of 14 subunits composed of two heptameric rings stacked back-to-back. Interacts with the co-chaperonin GroES.

It is found in the cytoplasm. It carries out the reaction ATP + H2O + a folded polypeptide = ADP + phosphate + an unfolded polypeptide.. Its function is as follows. Together with its co-chaperonin GroES, plays an essential role in assisting protein folding. The GroEL-GroES system forms a nano-cage that allows encapsulation of the non-native substrate proteins and provides a physical environment optimized to promote and accelerate protein folding. The polypeptide is Chaperonin GroEL (Bacillus cereus (strain G9842)).